The chain runs to 546 residues: ATP synthase subunit alpha (546 aa).

ATP is bound at residue 173–180 (GDRQTGKT). Residues 520 to 546 (VDKKTAPKSVTPVDQEQIKAGKAQEKK) are disordered. A compositionally biased stretch (basic and acidic residues) spans 535 to 546 (EQIKAGKAQEKK).

Belongs to the ATPase alpha/beta chains family. As to quaternary structure, F-type ATPases have 2 components, CF(1) - the catalytic core - and CF(0) - the membrane proton channel. CF(1) has five subunits: alpha(3), beta(3), gamma(1), delta(1), epsilon(1). CF(0) has three main subunits: a(1), b(2) and c(9-12). The alpha and beta chains form an alternating ring which encloses part of the gamma chain. CF(1) is attached to CF(0) by a central stalk formed by the gamma and epsilon chains, while a peripheral stalk is formed by the delta and b chains.

The protein localises to the cell membrane. It catalyses the reaction ATP + H2O + 4 H(+)(in) = ADP + phosphate + 5 H(+)(out). In terms of biological role, produces ATP from ADP in the presence of a proton gradient across the membrane. The alpha chain is a regulatory subunit. The polypeptide is ATP synthase subunit alpha (Bifidobacterium animalis subsp. lactis (strain AD011)).